A 588-amino-acid polypeptide reads, in one-letter code: Phosphoinositide phosphatase SAC8 (588 aa).

The interval phenylalanine 37–glycine 56 is disordered. A compositionally biased stretch (basic and acidic residues) spans asparagine 40 to aspartate 50. Residues leucine 129–glycine 455 enclose the SAC domain. The Phosphatase catalytic core motif lies at arginine 390–asparagine 401. Helical transmembrane passes span serine 524–isoleucine 544 and leucine 555–glycine 575.

As to expression, ubiquitous with a higher level of expression in young seedlings than in other tissues.

The protein localises to the endoplasmic reticulum membrane. Phosphoinositide phosphatase that hydrolyzes PtdIns(3)P and PtdIns(4)P. This chain is Phosphoinositide phosphatase SAC8 (SAC8), found in Arabidopsis thaliana (Mouse-ear cress).